A 750-amino-acid polypeptide reads, in one-letter code: Cellulose synthase-like protein H1 (750 aa).

2 helical membrane passes run 27-47 (LAIL…DSGA) and 52-72 (AALA…NAKW). Catalysis depends on residues D137 and D459. Helical transmembrane passes span 537 to 557 (VWPV…YCLL), 570 to 590 (GFYI…MEFI), 608 to 628 (ITSA…TLGF), 664 to 684 (VFIP…VGAW), 697 to 717 (GPGI…MPLL), and 727 to 747 (GIPW…LLFC).

It belongs to the glycosyltransferase 2 family. Plant cellulose synthase-like H subfamily.

Its subcellular location is the golgi apparatus membrane. Functionally, thought to be a Golgi-localized beta-glycan synthase that polymerize the backbones of noncellulosic polysaccharides (hemicelluloses) of plant cell wall. The chain is Cellulose synthase-like protein H1 (CSLH1) from Oryza sativa subsp. japonica (Rice).